Here is a 138-residue protein sequence, read N- to C-terminus: Small ribosomal subunit protein uS11c (138 aa).

The interval 1 to 23 is disordered; sequence MAKPIPRIGSRRNGRISSRKSTR. The segment covering 9-23 has biased composition (basic residues); that stretch reads GSRRNGRISSRKSTR.

The protein belongs to the universal ribosomal protein uS11 family. Part of the 30S ribosomal subunit.

The protein localises to the plastid. Its subcellular location is the chloroplast. This chain is Small ribosomal subunit protein uS11c, found in Cucumis sativus (Cucumber).